The primary structure comprises 219 residues: Putative GEM-like protein 8 (219 aa).

In terms of domain architecture, GRAM spans 96–174 (KIYKRLFKVS…CKINGVNQSQ (79 aa)).

It belongs to the GEM family.

In Arabidopsis thaliana (Mouse-ear cress), this protein is Putative GEM-like protein 8.